The chain runs to 205 residues: Small ribosomal subunit protein uS4 (205 aa).

The interval 18–46 (NIWGRPKSPVNRREYGPGQHGQRRKGKLS) is disordered. An S4 RNA-binding domain is found at 94 to 157 (RRLDTVVYRS…KQLAIVLEAN (64 aa)).

The protein belongs to the universal ribosomal protein uS4 family. As to quaternary structure, part of the 30S ribosomal subunit. Contacts protein S5. The interaction surface between S4 and S5 is involved in control of translational fidelity.

One of the primary rRNA binding proteins, it binds directly to 16S rRNA where it nucleates assembly of the body of the 30S subunit. Functionally, with S5 and S12 plays an important role in translational accuracy. The polypeptide is Small ribosomal subunit protein uS4 (Rhodopseudomonas palustris (strain BisB5)).